The following is a 258-amino-acid chain: (S)-hydroxynitrile lyase (258 aa).

The AB hydrolase-1 domain maps to 5 to 242; the sequence is HFVLIHTICH…GGDHKLQLTK (238 aa). Residues T11 and S80 each coordinate 2-hydroxy-2-methylpropanenitrile. The acetone site is built by T11, S80, and C81. S80 serves as the catalytic Proton donor/acceptor. H236 acts as the Proton donor/acceptor in catalysis.

Belongs to the AB hydrolase superfamily. Hydroxynitrile lyase family. In terms of assembly, homotetramer.

It catalyses the reaction a monosubstituted aliphatic (S)-hydroxynitrile = an aldehyde + hydrogen cyanide. The enzyme catalyses a disubstituted aliphatic (S)-hydroxynitrile = a ketone + hydrogen cyanide. The catalysed reaction is an aromatic (S)-hydroxynitrile = an aromatic aldehyde + hydrogen cyanide. It carries out the reaction 2-hydroxy-2-methylpropanenitrile = acetone + hydrogen cyanide. It catalyses the reaction butan-2-one + hydrogen cyanide = 2-hydroxy-2-methylbutanenitrile. The enzyme catalyses pentan-2-one + hydrogen cyanide = (2S)-2-hydroxy-2-methylpentanenitrile. The catalysed reaction is hexan-2-one + hydrogen cyanide = (2S)-2-hydroxy-2-methylhexanenitrile. It carries out the reaction heptan-2-one + hydrogen cyanide = (2S)-2-hydroxy-2-methylheptanenitrile. It catalyses the reaction 4-methylpentan-2-one + hydrogen cyanide = (2S)-2-hydroxy-2,4-dimethylpentanenitrile. The enzyme catalyses 3,3-dimethylbutan-2-one + hydrogen cyanide = (2S)-2-hydroxy-2-methyl-3,3-dimethylbutanenitrile. The catalysed reaction is acetophenone + hydrogen cyanide = (2S)-2-hydroxy-2-phenylpropanenitrile. It carries out the reaction propanal + hydrogen cyanide = (2S)-2-hydroxybutanenitrile. It catalyses the reaction pentanal + hydrogen cyanide = (2S)-2-hydroxyhexanenitrile. The enzyme catalyses 2-methylpropanal + hydrogen cyanide = (2S)-2-hydroxy-3-methylbutanenitrile. The catalysed reaction is 2,2-dimethylpropanal + hydrogen cyanide = (2S)-2-hydroxy-3,3-dimethylbutanenitrile. It carries out the reaction acrolein + hydrogen cyanide = (2S)-2-hydroxybut-3-enenitrile. It catalyses the reaction (2E)-but-2-enal + hydrogen cyanide = (2S,3E)-2-hydroxypent-3-enenitrile. The enzyme catalyses (E)-hex-2-enal + hydrogen cyanide = (2S,3E)-2-hydroxyhept-3-enenitrile. The catalysed reaction is cyclohexanecarbaldehyde + hydrogen cyanide = (2S)-2-cyclohexyl-2-hydroxyacetonitrile. It carries out the reaction benzaldehyde + hydrogen cyanide = (S)-mandelonitrile. It catalyses the reaction 4-methoxybenzaldehyde + hydrogen cyanide = (2S)-2-hydroxy-2-(4-methoxyphenyl)acetonitrile. The enzyme catalyses piperonal + hydrogen cyanide = (2S)-2-(2H-1,3-benzodioxol-5-yl)-2-hydroxyacetonitrile. The catalysed reaction is formylthiophene + hydrogen cyanide = (2R)-2-hydroxy-2-(thiophen-2-yl)acetonitrile. It carries out the reaction 3-formylthiophene + hydrogen cyanide = (2S)-2-hydroxy-2-(thiophen-3-yl)acetonitrile. It catalyses the reaction furan-3-carbaldehyde + hydrogen cyanide = (2S)-2-(furan-3-yl)-2-hydroxyacetonitrile. In terms of biological role, involved in cyanogenesis, the release of HCN from cyanogenic glycosides in injured tissues; the release of toxic HCN is believed to play a central role in the defense mechanism of plants against herbivores and microbial attack. Decomposes a variety of cyanohydrins (alpha-hydroxynitriles) into HCN and the corresponding aldehydes or ketones; two natural substrates are 2-hydroxy-2-methylpropanenitrile (acetone cyanohydrin) and 2-hydroxy-2-methylbutanenitrile (2-butanone cyanohydrin), but in vitro can also act on 2-hydroxy-2-methylpentanenitrile (2-pentanone cyanohydrin) and mandelonitrile. Is also able to catalyze the reverse reaction in vitro, leading to the stereospecific synthesis of aliphatic, aromatic, and heterocyclic cyanohydrins, important intermediates in the production of various agrochemicals or pharmaceuticals. The sequence is that of (S)-hydroxynitrile lyase from Manihot esculenta (Cassava).